A 150-amino-acid polypeptide reads, in one-letter code: Ribosome maturation factor RimP (150 aa).

The protein belongs to the RimP family.

The protein resides in the cytoplasm. Its function is as follows. Required for maturation of 30S ribosomal subunits. The protein is Ribosome maturation factor RimP of Methylococcus capsulatus (strain ATCC 33009 / NCIMB 11132 / Bath).